The sequence spans 505 residues: Deoxyguanosinetriphosphate triphosphohydrolase (505 aa).

The HD domain maps to 66–273 (RLTHSMEVQQ…MEAADDISYC (208 aa)).

The protein belongs to the dGTPase family. Type 1 subfamily. In terms of assembly, homotetramer. The cofactor is Mg(2+).

The enzyme catalyses dGTP + H2O = 2'-deoxyguanosine + triphosphate + H(+). Its function is as follows. dGTPase preferentially hydrolyzes dGTP over the other canonical NTPs. This is Deoxyguanosinetriphosphate triphosphohydrolase from Salmonella typhimurium (strain LT2 / SGSC1412 / ATCC 700720).